We begin with the raw amino-acid sequence, 455 residues long: MTDLSKEELLQRIQQLENENEQLKAVALQSLHTLRYNQSCSHSLQQSNSVNEEPLSLEEFKRYGRQMIVPKFGSLNAQKKLRSSKILVVGAGGLGSPALQYLCAAGIGEIGIIDDDTVDVSNLHRQIIHKSSLVGILKCESAKQSMKDLNPFVKVETYPERLTVFNAFEIIDKYDLVLDCTDHPAVRYLINDVCVLLGKTIVSGSGLRAEGQLTILNYDQVGPCYRCFYPQAPEPSSITSCSDGGVIGPAIGLVGVAMAMETIKLLTGTYTRENFTPFLASYSAYPLQQMKTFKMRPKQSSCKVCGDRPEITKEMVENGSIDYVSFCGHIDEKNPPLQKKYRITVQEYSSLLNSQSREHTLIDVRPKEQFEITNLPGSINLDWPLVFSKCDNDKIDLLLPQDITKADQLYVICRFGNDSQLATAKLIEAGYLNAKDIIGGLNKWSEDIDAAFPKY.

Residues G93, D114, 121–125 (SNLHR), K138, and 182–183 (DH) each bind ATP. Zn(2+) contacts are provided by C224 and C227. The active-site Glycyl thioester intermediate; for adenylyltransferase activity is C241. Positions 302 and 305 each coordinate Zn(2+). The Rhodanese domain maps to 355-453 (QSREHTLIDV…WSEDIDAAFP (99 aa)). The active-site Cysteine persulfide intermediate; for sulfurtransferase activity is the C413.

This sequence in the N-terminal section; belongs to the HesA/MoeB/ThiF family. UBA4 subfamily. It depends on Zn(2+) as a cofactor.

Its subcellular location is the cytoplasm. The protein resides in the cytosol. It participates in tRNA modification; 5-methoxycarbonylmethyl-2-thiouridine-tRNA biosynthesis. Plays a central role in 2-thiolation of mcm(5)S(2)U at tRNA wobble positions of cytosolic tRNA(Lys), tRNA(Glu) and tRNA(Gln). Acts by mediating the C-terminal thiocarboxylation of sulfur carrier URM1. Its N-terminus first activates URM1 as acyl-adenylate (-COAMP), then the persulfide sulfur on the catalytic cysteine is transferred to URM1 to form thiocarboxylation (-COSH) of its C-terminus. The reaction probably involves hydrogen sulfide that is generated from the persulfide intermediate and that acts as a nucleophile towards URM1. Subsequently, a transient disulfide bond is formed. Does not use thiosulfate as sulfur donor; NFS1 probably acting as a sulfur donor for thiocarboxylation reactions. Prior mcm(5) tRNA modification by the elongator complex is required for 2-thiolation. May also be involved in protein urmylation. The sequence is that of Adenylyltransferase and sulfurtransferase UBA4 from Lodderomyces elongisporus (strain ATCC 11503 / CBS 2605 / JCM 1781 / NBRC 1676 / NRRL YB-4239) (Yeast).